The chain runs to 850 residues: Polyhomeotic-like protein 2 (850 aa).

5 disordered regions span residues 1 to 79, 233 to 314, 335 to 386, 402 to 436, and 528 to 553; these read MENE…QYLQ, QQTP…RAVP, LPQP…DHAL, THVH…PPQR, and MTSG…KPPQ. Residues 15-32 are compositionally biased toward low complexity; sequence SVTTNTSGTNSSSGCISS. Residues 33–56 are interaction with BMI1; sequence SGGGGGSGGRPTAPQISVYSGIPD. Over residues 343-352 the composition is skewed to low complexity; that stretch reads PQPQFVAQQQ. 2 stretches are compositionally biased toward polar residues: residues 368 to 380 and 402 to 425; these read LASV…LQSS and THVH…SQNG. The span at 529 to 543 shows a compositional bias: low complexity; the sequence is TSGNGNSASSIAGTA. Residues 550–579 carry the HD1 motif; sequence KPPQAIVKPQILTHVIEGFVIQEGAEPFPV. Residues lysine 590 and lysine 592 each participate in a glycyl lysine isopeptide (Lys-Gly) (interchain with G-Cter in SUMO2) cross-link. The tract at residues 597-624 is disordered; sequence FLPEKPPQQDHTTTTDSEMEEPYLQESK. Threonine 611 carries the post-translational modification Phosphothreonine. Phosphoserine is present on serine 613. Lysine 624 participates in a covalent cross-link: Glycyl lysine isopeptide (Lys-Gly) (interchain with G-Cter in SUMO2). Residues 625–659 form an FCS-type zinc finger; the sequence is EEGTPLKLKCELCGRVDFAYKFKRSKRFCSMACAK. The Zn(2+) site is built by cysteine 634, cysteine 637, cysteine 653, and cysteine 657. 2 disordered regions span residues 676–712 and 725–764; these read RSKL…SGTV and SQED…LDLP. Residue lysine 694 forms a Glycyl lysine isopeptide (Lys-Gly) (interchain with G-Cter in SUMO2) linkage. Residues 696-712 are compositionally biased toward polar residues; the sequence is SLPTLTKDTKKQPSGTV. Serine 743 is subject to Phosphoserine. The 65-residue stretch at 786-850 folds into the SAM domain; sequence WNVEDVYEFI…YARISMLKDS (65 aa). A Glycyl lysine isopeptide (Lys-Gly) (interchain with G-Cter in SUMO2) cross-link involves residue lysine 839.

Component of a PRC1-like complex. Interacts with CBX4. Interacts with BMI1, PCGF2, PHC1 and RNF2. Interacts with CHTOP. Interacts with the N-terminal region of the SP1 transcription factor and with MAPKAPK2. Interacts with SAMD7. Interacts with SAMD11. As to expression, isoform 2 is ubiquitously expressed in embryos and adult tissues at much higher level than isoform 1.

Its subcellular location is the nucleus. Its function is as follows. Component of a Polycomb group (PcG) multiprotein PRC1-like complex, a complex class required to maintain the transcriptionally repressive state of many genes, including Hox genes, throughout development. PcG PRC1 complex acts via chromatin remodeling and modification of histones; it mediates monoubiquitination of histone H2A 'Lys-119', rendering chromatin heritably changed in its expressibility. This is Polyhomeotic-like protein 2 (Phc2) from Mus musculus (Mouse).